A 237-amino-acid polypeptide reads, in one-letter code: Large ribosomal subunit protein uL3 (237 aa).

Disordered stretches follow at residues A133–K155 and P213–E237. The span at H135–R150 shows a compositional bias: polar residues. N5-methylglutamine is present on Q151. Low complexity predominate over residues A220–E237.

It belongs to the universal ribosomal protein uL3 family. Part of the 50S ribosomal subunit. Forms a cluster with proteins L14 and L19. Post-translationally, methylated by PrmB.

In terms of biological role, one of the primary rRNA binding proteins, it binds directly near the 3'-end of the 23S rRNA, where it nucleates assembly of the 50S subunit. The sequence is that of Large ribosomal subunit protein uL3 from Brucella suis biovar 1 (strain 1330).